We begin with the raw amino-acid sequence, 227 residues long: Small ribosomal subunit protein uS3 (227 aa).

Positions 38 to 106 constitute a KH type-2 domain; the sequence is LRKYLREKLA…EVHLNIVEIR (69 aa).

Belongs to the universal ribosomal protein uS3 family. As to quaternary structure, part of the 30S ribosomal subunit. Forms a tight complex with proteins S10 and S14.

Its function is as follows. Binds the lower part of the 30S subunit head. Binds mRNA in the 70S ribosome, positioning it for translation. This is Small ribosomal subunit protein uS3 from Paramagnetospirillum magneticum (strain ATCC 700264 / AMB-1) (Magnetospirillum magneticum).